Consider the following 1403-residue polypeptide: MAEHGESSEDRISEIDYEFLPELSALLGVDAVQLAKSQEEEEHKERMKMKKGFNSQMRSEAKRLKTFETYDTFRSWTPQEMAAAGFYHTGVKLGVQCFCCSLILFGNSLRKLPIERHKKLRPECEFLQGKDVGNIGKYDIRVKSPEKMLRGGKARYHEEEARLESFEDWPFYAHGTSPRVLSAAGFVFTGKRDTVQCFSCGGSLGNWEEGDDPWKEHAKWFPKCEFLQSKKSSEEIAQYIQGYEGFVHVTGEHFVNSWVRRELPMVSAYCNDSVFANEELRMDTFKDWPHESPVAVDALVRAGLFYTGKKGIVQCFSCGGCMEKCTEGDDPIQEHNKFFPNCVFLQTPKSSAEVIPALQSHCALPEAMETTSESNHDDPAAVHSTVVGLGRSEAQWFQEARSLSEQLRDNYTKATFRHMNLPEVCSSLGTDHLIGCDVSIISKHISQPVQGALTIPEVFSNLSSVMCVEGETGSGKTTFLKRIAFLWASGCCPLLYRFQLVFYLSLSSITPDQGLANIICAQLLGAGGCISEVCLSSIIQQLQHQVLFLLDDYSGLASLPQALHTLITKNYLSRTCLLIAVHTNRVRGIRSYLDTSLEIKEFPLSNTVYILKKFFSHNIKRLLEFMVYFGQNEDLQGIHKTPLFVAAVCTDWFENPSDQPFQDMALFKSYMQYLSLKHKGAAKPLQATVSSCGQLALTGLFSSCFEFNSDDLAEAGVDEDEELTTCLMSKFTAQRLRPVYRFLGPLFQEFLAAMRLTELLSSDRQEDQDLGLYYLRQINSPLKALTTYNNFLKYVFSHPSSKAGPTVVSHLLHLVDETELLENTYKNEDYVNHPPGTSRIMKGLKELWLLSPEYYSSFVSEHLLRIALNFAYESNTVAECSPFILQFLRGRTLALKVLNLQYFRDHPESLLLVKSLEVSINGNKVPKVVDYSVMEKSFETLQPPTIDQDYASAFEQMKEHEKNLSENEETIKSIKNIFPLQPPKISSGYWKLSPKPCKIPRLEVGVTNMGPADQALLQVLMEVFSASQSIEFRLSDSSGFLESIRPALELSKASVTKCSMSRLELSRAEQELLLTLPALQSLEVSETNQLPDQLFHNLHKFLGLKELCVRLDGKPDVLSVLPGEFPNLLHMEKLSIRTSMESDLSKLVKLIQNSPNLHVFHLKCDFLSNCDSLMAVLASCKKLREIEFSGRCFEAMPFVNILPNFISLKILNLISQQFPDKETSEKFAQALGSLRNLEELLVPTGDGIHQVAKLIVRQCLQLPCLRVLAFHYILDNDSVIEIARVATSGGFQKLEKLDLSMNHKITEEGYRNFFQALDNLPNLQNLNICRHIPECIQVQATTVKALGQCVSRLPSLTRLHMLSWLLDEEDMKVINDVKERHPQSKRLIIFWKWIVPFSPVVLE.

3 BIR repeats span residues 63 to 128, 162 to 228, and 281 to 346; these read RLKT…EFLQ, RLES…EFLQ, and RMDT…VFLQ. Cysteine 315, cysteine 318, histidine 335, and cysteine 342 together coordinate Zn(2+). The NACHT domain occupies 464-758; it reads SVMCVEGETG…EFLAAMRLTE (295 aa). An ATP-binding site is contributed by lysine 476.

Interacts (via NACHT domain) with APAF1 (via CARD and NACHT domains).

In terms of biological role, anti-apoptotic protein which acts by inhibiting the activities of CASP3, CASP7 and CASP9. Can inhibit the autocleavage of pro-CASP9 and cleavage of pro-CASP3 by CASP9. Capable of inhibiting CASP9 autoproteolysis at 'Asp-315' and decreasing the rate of auto proteolysis at 'Asp-330'. Acts as a mediator of neuronal survival in pathological conditions. Prevents motor-neuron apoptosis induced by a variety of signals. The protein is Baculoviral IAP repeat-containing protein 1a (Naip1) of Mus musculus (Mouse).